Reading from the N-terminus, the 249-residue chain is Ribosomal RNA small subunit methyltransferase G (249 aa).

S-adenosyl-L-methionine contacts are provided by residues Gly88, Phe93, 111–113 (DAT), 139–140 (AE), and Arg158.

This sequence belongs to the methyltransferase superfamily. RNA methyltransferase RsmG family.

It localises to the cytoplasm. In terms of biological role, specifically methylates the N7 position of a guanine in 16S rRNA. The chain is Ribosomal RNA small subunit methyltransferase G from Thermus thermophilus (strain ATCC BAA-163 / DSM 7039 / HB27).